Reading from the N-terminus, the 58-residue chain is Potassium channel toxin alpha-KTx 1.6 (58 aa).

The signal sequence occupies residues 1–21; it reads MKISFLLLLAIVICSIGWTEA. Position 22 is a pyrrolidone carboxylic acid (glutamine 22). 3 disulfide bridges follow: cysteine 28–cysteine 49, cysteine 34–cysteine 54, and cysteine 38–cysteine 56.

This sequence belongs to the short scorpion toxin superfamily. Potassium channel inhibitor family. Alpha-KTx 01 subfamily. Expressed by the venom gland.

It is found in the secreted. Potent blocker of both large-conductance calcium-activated potassium channels (KCa1.1/KCNMA1) and voltage-gated potassium channels (Kv1.3/KCNA3 and ERG1/Kv11.1/KCNH2). In Olivierus martensii (Manchurian scorpion), this protein is Potassium channel toxin alpha-KTx 1.6.